The chain runs to 339 residues: Phenylalanine--tRNA ligase alpha subunit (339 aa).

Residue Glu-254 participates in Mg(2+) binding.

Belongs to the class-II aminoacyl-tRNA synthetase family. Phe-tRNA synthetase alpha subunit type 1 subfamily. In terms of assembly, tetramer of two alpha and two beta subunits. Mg(2+) is required as a cofactor.

It is found in the cytoplasm. The catalysed reaction is tRNA(Phe) + L-phenylalanine + ATP = L-phenylalanyl-tRNA(Phe) + AMP + diphosphate + H(+). This chain is Phenylalanine--tRNA ligase alpha subunit, found in Clostridium perfringens (strain SM101 / Type A).